The chain runs to 97 residues: Mitochondrial import inner membrane translocase subunit Tim8 A (97 aa).

The Twin CX3C motif signature appears at 43-66; sequence CWEKCMDKPGPKLDSRAEACFVNC. Intrachain disulfides connect cysteine 43–cysteine 66 and cysteine 47–cysteine 62. A phosphoserine mark is found at serine 57, serine 87, serine 94, and serine 96.

Belongs to the small Tim family. Heterohexamer; composed of 3 copies of TIMM8A and 3 copies of TIMM13, named soluble 70 kDa complex. Associates with the TIM22 complex, whose core is composed of TIMM22. As to expression, highly expressed in fetal and adult brain, followed by fetal lung, liver and kidney. Also expressed in heart, placenta, lung, liver, kidney, pancreas, skeletal muscle and heart.

It is found in the mitochondrion inner membrane. Mitochondrial intermembrane chaperone that participates in the import and insertion of some multi-pass transmembrane proteins into the mitochondrial inner membrane. Also required for the transfer of beta-barrel precursors from the TOM complex to the sorting and assembly machinery (SAM complex) of the outer membrane. Acts as a chaperone-like protein that protects the hydrophobic precursors from aggregation and guide them through the mitochondrial intermembrane space. The TIMM8-TIMM13 complex mediates the import of proteins such as TIMM23, SLC25A12/ARALAR1 and SLC25A13/ARALAR2, while the predominant TIMM9-TIMM10 70 kDa complex mediates the import of much more proteins. Probably necessary for normal neurologic development. The polypeptide is Mitochondrial import inner membrane translocase subunit Tim8 A (TIMM8A) (Homo sapiens (Human)).